A 381-amino-acid polypeptide reads, in one-letter code: Erythronate-4-phosphate dehydrogenase (381 aa).

2 residues coordinate substrate: Ser45 and Thr67. NAD(+)-binding positions include Asp148, 207–209 (ASR), and Asp233. Residue Arg209 is part of the active site. Glu238 is an active-site residue. The Proton donor role is filled by His255. Gly258 lines the NAD(+) pocket.

Belongs to the D-isomer specific 2-hydroxyacid dehydrogenase family. PdxB subfamily. As to quaternary structure, homodimer.

It is found in the cytoplasm. It carries out the reaction 4-phospho-D-erythronate + NAD(+) = (R)-3-hydroxy-2-oxo-4-phosphooxybutanoate + NADH + H(+). It participates in cofactor biosynthesis; pyridoxine 5'-phosphate biosynthesis; pyridoxine 5'-phosphate from D-erythrose 4-phosphate: step 2/5. Functionally, catalyzes the oxidation of erythronate-4-phosphate to 3-hydroxy-2-oxo-4-phosphonooxybutanoate. The chain is Erythronate-4-phosphate dehydrogenase from Idiomarina loihiensis (strain ATCC BAA-735 / DSM 15497 / L2-TR).